Here is a 338-residue protein sequence, read N- to C-terminus: Protein RecA (338 aa).

66 to 73 lines the ATP pocket; it reads GPESSGKT.

It belongs to the RecA family.

It is found in the cytoplasm. Functionally, can catalyze the hydrolysis of ATP in the presence of single-stranded DNA, the ATP-dependent uptake of single-stranded DNA by duplex DNA, and the ATP-dependent hybridization of homologous single-stranded DNAs. It interacts with LexA causing its activation and leading to its autocatalytic cleavage. The sequence is that of Protein RecA from Geobacter sulfurreducens (strain ATCC 51573 / DSM 12127 / PCA).